The chain runs to 607 residues: UPF0329 protein ECU06_1610 (607 aa).

Disordered regions lie at residues Val312–Gly410 and Thr531–Val570. The span at His313–Gly347 shows a compositional bias: basic and acidic residues. Positions Lys353–Gly364 are enriched in basic residues. A compositionally biased stretch (basic and acidic residues) spans Lys365–Asp374. The segment covering Arg375 to Ala393 has biased composition (acidic residues). The segment covering Thr531 to Ser543 has biased composition (polar residues). The span at Asp549–Ser558 shows a compositional bias: acidic residues.

Belongs to the UPF0329 family.

This chain is UPF0329 protein ECU06_1610, found in Encephalitozoon cuniculi (strain GB-M1) (Microsporidian parasite).